Reading from the N-terminus, the 259-residue chain is Probable ABC transporter permease protein RT0041 (259 aa).

The next 5 helical transmembrane spans lie at 20–40 (VGIF…PPLY), 49–69 (LFIG…SGAV), 148–168 (VIAA…IGVM), 195–215 (LIDV…ISII), and 237–257 (AVVN…ELLF).

It belongs to the MlaE permease family.

It localises to the cell inner membrane. Functionally, could be part of an ABC transporter complex. The polypeptide is Probable ABC transporter permease protein RT0041 (Rickettsia typhi (strain ATCC VR-144 / Wilmington)).